Reading from the N-terminus, the 101-residue chain is NADH-quinone oxidoreductase subunit K (101 aa).

The next 3 helical transmembrane spans lie at 4–24 (LSDYLILSSVIFCIGLVGIFV), 29–49 (IITLLMCVELILVAVNTNFVA), and 61–81 (IFVFFILTVAAAEVAIGLAIL).

It belongs to the complex I subunit 4L family. NDH-1 is composed of 14 different subunits. Subunits NuoA, H, J, K, L, M, N constitute the membrane sector of the complex.

Its subcellular location is the cell inner membrane. The catalysed reaction is a quinone + NADH + 5 H(+)(in) = a quinol + NAD(+) + 4 H(+)(out). In terms of biological role, NDH-1 shuttles electrons from NADH, via FMN and iron-sulfur (Fe-S) centers, to quinones in the respiratory chain. The immediate electron acceptor for the enzyme in this species is believed to be ubiquinone. Couples the redox reaction to proton translocation (for every two electrons transferred, four hydrogen ions are translocated across the cytoplasmic membrane), and thus conserves the redox energy in a proton gradient. This Ruthia magnifica subsp. Calyptogena magnifica protein is NADH-quinone oxidoreductase subunit K.